Here is a 204-residue protein sequence, read N- to C-terminus: NADH-ubiquinone oxidoreductase subunit 9 (204 aa).

The protein belongs to the complex I 30 kDa subunit family. In terms of assembly, complex I is composed of about 30 different subunits.

The protein localises to the mitochondrion inner membrane. It catalyses the reaction a ubiquinone + NADH + 5 H(+)(in) = a ubiquinol + NAD(+) + 4 H(+)(out). Its function is as follows. Core subunit of the mitochondrial membrane respiratory chain NADH dehydrogenase (Complex I) that is believed to belong to the minimal assembly required for catalysis. Complex I functions in the transfer of electrons from NADH to the respiratory chain. The immediate electron acceptor for the enzyme is believed to be ubiquinone. The protein is NADH-ubiquinone oxidoreductase subunit 9 (NAD9) of Reclinomonas americana.